We begin with the raw amino-acid sequence, 155 residues long: UPF0178 protein ACICU_02858 (155 aa).

Positions 120 to 155 are disordered; that stretch reads GAGVQTGGPPPISERDKREFSSALDQTILKQKRKTA.

The protein belongs to the UPF0178 family.

This chain is UPF0178 protein ACICU_02858, found in Acinetobacter baumannii (strain ACICU).